The following is a 577-amino-acid chain: Probable L-gulonolactone oxidase 4 (577 aa).

Positions 1-17 (MSFWLSLIFCFFTFASS) are cleaved as a signal peptide. Residues 46 to 228 (SICKAAKVEY…SQVTFELQPM (183 aa)) form the FAD-binding PCMH-type domain.

It belongs to the oxygen-dependent FAD-linked oxidoreductase family. The cofactor is FAD.

The catalysed reaction is L-gulono-1,4-lactone + O2 = L-ascorbate + H2O2 + H(+). It participates in cofactor biosynthesis; L-ascorbate biosynthesis. Functionally, may be involved in the biosynthesis of ascorbic acid. The chain is Probable L-gulonolactone oxidase 4 from Arabidopsis thaliana (Mouse-ear cress).